Reading from the N-terminus, the 1178-residue chain is Thrombospondin-2 (1178 aa).

An N-terminal signal peptide occupies residues 1–22; the sequence is MLQRSRLLWLAVFITLWVSSDA. In terms of domain architecture, Laminin G-like spans 25–221; that stretch reads DAKEEENTFD…LQNIHLIFDT (197 aa). 4 N-linked (GlcNAc...) asparagine glycosylation sites follow: N157, N244, N317, and N322. Residues 324–381 enclose the VWFC domain; it reads SVCWQDGRVFADSESWIVDSCTKCTCQDSKIVCHQITCPPVSCADPSFIEGECCPVCS. TSP type-1 domains lie at 387–437, 443–498, and 500–555; these read EEGW…KKCD, DGGW…APCP, and NGQW…RDCP. 27 disulfide bridges follow: C399–C431, C403–C436, C414–C421, C455–C492, C459–C497, C470–C482, C512–C549, C516–C554, C527–C539, C559–C570, C564–C580, C583–C594, C600–C616, C607–C625, C628–C652, C658–C671, C665–C684, C686–C697, C713–C721, C726–C746, C762–C782, C785–C805, C821–C841, C844–C864, C882–C902, C918–C938, and C954–C1175. Residue N463 is glycosylated (N-linked (GlcNAc...) asparagine). The 41-residue stretch at 555 to 595 folds into the EGF-like 1 domain; the sequence is PIDGCLSNPCFPGAECNSYPDGSWSCGPCPAGFLGNGTVCE. N-linked (GlcNAc...) asparagine glycosylation occurs at N590. The EGF-like 2 domain maps to 654-698; sequence PENPCKDKTHSCHKSAECIYLGHFSDPMYKCECRTGYAGDGRICG. TSP type-3 repeat units lie at residues 699-734, 735-770, 771-793, 794-829, 830-852, 853-890, 891-926, and 927-962; these read EDSDLDGWPNNNLVCAANATYHCVKDNCPLLPNSGQ, EDFDKDGKGDACDEDDDNDGVEDDKDNCPLLFNPRQ, FDYDKDEVGDRCDNCPYVHNPAQ, IDTDNNGEGDSCAVDIDGDDIFNERDNCPYVYNTDQ, SDTDGDGVGDQCDNCPLMHNPDQ, TDADNDLVGDQCDNNEDIDEDGHQNNQDNCPYIPNANQ, ADHDKDGKGDACDPDDDNDGIPDDRDNCRLRYNPEQ, and EDSDGDGRGDICKDDFDDDNVPDIFDVCPENNAISE. N716 is a glycosylation site (N-linked (GlcNAc...) asparagine). The disordered stretch occupies residues 737 to 760; the sequence is FDKDGKGDACDEDDDNDGVEDDKD. Over residues 746–759 the composition is skewed to acidic residues; that stretch reads CDEDDDNDGVEDDK. Positions 852–941 are disordered; that stretch reads QTDADNDLVG…DGRGDICKDD (90 aa). A compositionally biased stretch (acidic residues) spans 853 to 872; sequence TDADNDLVGDQCDNNEDIDE. Over residues 891–901 the composition is skewed to basic and acidic residues; it reads ADHDKDGKGDA. Over residues 902–911 the composition is skewed to acidic residues; the sequence is CDPDDDNDGI. 2 stretches are compositionally biased toward basic and acidic residues: residues 912-924 and 931-940; these read PDDRDNCRLRYNP and GDGRGDICKD. The Cell attachment site signature appears at 934 to 936; it reads RGD. Positions 966–1178 constitute a TSP C-terminal domain; that stretch reads RKFQMVPLDP…SDLKYECRDA (213 aa). N1075 is a glycosylation site (N-linked (GlcNAc...) asparagine).

This sequence belongs to the thrombospondin family. In terms of assembly, homotrimer; disulfide-linked. Can bind to fibrinogen, fibronectin, laminin and type V collagen.

Adhesive glycoprotein that mediates cell-to-cell and cell-to-matrix interactions. This chain is Thrombospondin-2 (THBS2), found in Gallus gallus (Chicken).